The sequence spans 414 residues: DNA primase small subunit PriS (414 aa).

Catalysis depends on residues D98, D100, and D312.

Belongs to the eukaryotic-type primase small subunit family. In terms of assembly, heterodimer of a small subunit (PriS) and a large subunit (PriL). Requires Mg(2+) as cofactor. It depends on Mn(2+) as a cofactor.

Catalytic subunit of DNA primase, an RNA polymerase that catalyzes the synthesis of short RNA molecules used as primers for DNA polymerase during DNA replication. The small subunit contains the primase catalytic core and has DNA synthesis activity on its own. Binding to the large subunit stabilizes and modulates the activity, increasing the rate of DNA synthesis while decreasing the length of the DNA fragments, and conferring RNA synthesis capability. The DNA polymerase activity may enable DNA primase to also catalyze primer extension after primer synthesis. May also play a role in DNA repair. The chain is DNA primase small subunit PriS from Methanosarcina mazei (strain ATCC BAA-159 / DSM 3647 / Goe1 / Go1 / JCM 11833 / OCM 88) (Methanosarcina frisia).